Reading from the N-terminus, the 567-residue chain is MYQGHMQLVNEQQESRPLLSPSIDDFLCETKSEAIAKPVTSNTAVLTTGLDLLDLSEPVSQPQTKAKKSEPSSKSSSLKKKADGSDLISADAEQRAQALRGPETSSLDLDIQTQLEKWDDVKFHGDRTSKGHLMAERKSCSSRTGSKELLWSAEHRSQPELSTGKSALNSESASELELVAPAQARLTKEHRWGSALLSRNHSLEEEFERAKAAVESDTEFWDKMQAEWEEMARRNWISENQEAQNQVTVSASEKGYYFHTENPFKDWPGAFEEGLKRLKEGDLPVTILFMEAAILQDPGDAEAWQFLGITQAENENEQAAIVALQRCLELQPNNLKALMALAVSYTNTSHQQDACEALKNWIKQNPKYKYLVKNKKGSPGLTRRMSKSPVDSSVLEGVKELYLEAAHQNGDMIDPDLQTGLGVLFHLSGEFNRAIDAFNAALTVRPEDYSLWNRLGATLANGDRSEEAVEAYTRALEIQPGFIRSRYNLGISCINLGAYREAVSNFLTALSLQRKSRNQQQVPHPAISGNIWAALRIALSLMDQPELFQAANLGDLDVLLRAFNLDP.

The disordered stretch occupies residues 56 to 105; the sequence is SEPVSQPQTKAKKSEPSSKSSSLKKKADGSDLISADAEQRAQALRGPETS. A Phosphoserine modification is found at Ser-146. The disordered stretch occupies residues 150 to 169; it reads LWSAEHRSQPELSTGKSALN. 3 positions are modified to phosphoserine: Ser-194, Ser-198, and Ser-202. TPR repeat units lie at residues 267-300, 301-334, and 336-368; these read WPGAFEEGLKRLKEGDLPVTILFMEAAILQDPGD, AEAWQFLGITQAENENEQAAIVALQRCLELQPNN, and KALMALAVSYTNTSHQQDACEALKNWIKQNPKY. Phosphoserine is present on residues Ser-386 and Ser-388. 3 TPR repeats span residues 415 to 448, 450 to 482, and 484 to 516; these read PDLQTGLGVLFHLSGEFNRAIDAFNAALTVRPED, SLWNRLGATLANGDRSEEAVEAYTRALEIQPGF, and RSRYNLGISCINLGAYREAVSNFLTALSLQRKS.

It belongs to the peroxisomal targeting signal receptor family. In terms of assembly, interacts with RAB8B. Forms an obligate 4:4 complex with HCN2. Interacts with HCN3. Interacts with HCN4 with a 4:4 HCN4:PEX5L stoichiometry; reduces the effects of cAMP on the voltage-dependence and rate of activation of HCN4.

The protein localises to the cytoplasm. It localises to the membrane. Its function is as follows. Accessory subunit of hyperpolarization-activated cyclic nucleotide-gated (HCN) channels, regulating their cell-surface expression and cyclic nucleotide dependence. The polypeptide is PEX5-related protein (Pex5l) (Mus musculus (Mouse)).